An 895-amino-acid chain; its full sequence is Androgen receptor (895 aa).

The modulating stretch occupies residues Met1–Lys533. An interaction with ZNF318 region spans residues Met1–Ala562. Disordered regions lie at residues Val33–Leu150 and Gln175–Gly211. Low complexity-rich tracts occupy residues Ala44–Gln81 and Gln175–Ala200. A Phosphoserine; by CDK9 modification is found at Ser65. Ser79 is subject to Phosphoserine. Polar residues predominate over residues Pro201–Gly211. Residue Tyr208 is modified to Phosphotyrosine; by CSK. At Ser241 the chain carries Phosphoserine. Residue Tyr252 is modified to Phosphotyrosine; by CSK and TNK2. Tyr292, Tyr331, Tyr342, and Tyr347 each carry phosphotyrosine; by CSK. Position 348 is a phosphotyrosine; by CSK and TNK2 (Tyr348). A Glycyl lysine isopeptide (Lys-Gly) (interchain with G-Cter in SUMO) cross-link involves residue Lys371. Tyr378 carries the post-translational modification Phosphotyrosine; by CSK. A Glycyl lysine isopeptide (Lys-Gly) (interchain with G-Cter in SUMO) cross-link involves residue Lys496. Residues Tyr510 and Tyr527 each carry the phosphotyrosine; by CSK modification. Residues Tyr527–Thr894 form an interaction with LPXN region. A DNA-binding region (nuclear receptor) is located at residues Thr534 to Leu607. 2 NR C4-type zinc fingers span residues Cys535 to Cys555 and Cys571 to Cys595. The interaction with HIPK3 stretch occupies residues Tyr547–Val637. The interval Gln567–Thr894 is interaction with CCAR1. The segment at Met600 to Thr894 is interaction with KAT7. Residue Ser626 is modified to Phosphoserine; by STK4/MST1. The NR LBD domain maps to Glu644–Ile875. Residues Asn681 and Arg728 each contribute to the 17beta-hydroxy-5alpha-androstan-3-one site. Residues Lys821 and Lys823 each participate in a glycyl lysine isopeptide (Lys-Gly) (interchain with G-Cter in ubiquitin) cross-link. A 17beta-hydroxy-5alpha-androstan-3-one-binding site is contributed by Thr853. Tyr891 is subject to Phosphotyrosine; by CSK.

The protein belongs to the nuclear hormone receptor family. NR3 subfamily. As to quaternary structure, binds DNA as a homodimer. Part of a ternary complex containing AR, EFCAB6/DJBP and PARK7. Interacts with HIPK3 and NR0B2 in the presence of androgen. The ligand binding domain interacts with KAT7/HBO1 in the presence of dihydrotestosterone. Interacts with EFCAB6/DJBP, PQBP1, RANBP9, RBAK, SPDEF, SRA1, TGFB1I1 and RREB1. Interacts with ZMIZ1/ZIMP10 and ZMIZ2/ZMIP7 which both enhance its transactivation activity. Interacts with SLC30A9 and RAD54L2/ARIP4. Interacts with MACROD1 (via macro domain). Interacts via the ligand-binding domain with LXXLL and FXXLF motifs from NCOA1, NCOA2, NCOA3 and MAGEA11. Interacts (via nuclear receptor DNA binding domain and nuclear receptor ligand binding domain) with NCOA4. The AR N-terminal poly-Gln region binds Ran resulting in enhancement of AR-mediated transactivation. Ran-binding decreases as the poly-Gln length increases. Interacts with HIP1 (via coiled coil domain). Interacts (via ligand-binding domain) with TRIM68. Interacts with TNK2. Interacts with USP26. Interacts with RNF6. Interacts (regulated by RNF6 probably through polyubiquitination) with RNF14; regulates AR transcriptional activity. Interacts with PRMT2 and TRIM24. Interacts with RACK1. Interacts with RANBP10; this interaction enhances dihydrotestosterone-induced AR transcriptional activity. Interacts with PRPF6 in a hormone-independent way; this interaction enhances dihydrotestosterone-induced AR transcriptional activity. Interacts with STK4/MST1. Interacts with ZIPK/DAPK3. Interacts with LPXN. Interacts with MAK. Part of a complex containing AR, MAK and NCOA3. Interacts with CRY1. Interacts with CCAR1 and GATA2. Interacts with ZNF318. Interacts with BUD31. Interacts with ARID4A. Interacts with ARID4B. Interacts (via NR LBD domain) with ZBTB7A; the interaction is direct and androgen-dependent. Interacts with NCOR1. Interacts with NCOR2. Interacts with CRY2 in a ligand-dependent manner. Phosphorylated in prostate cancer cells in response to several growth factors including EGF. Phosphorylation is induced by c-Src kinase (CSK). Tyr-510 is one of the major phosphorylation sites and an increase in phosphorylation and Src kinase activity is associated with prostate cancer progression. Phosphorylation by TNK2 enhances the DNA-binding and transcriptional activity. Phosphorylation at Ser-65 by CDK9 regulates AR promoter selectivity and cell growth. Post-translationally, sumoylated on Lys-371 (major) and Lys-496. Ubiquitinated. Deubiquitinated by USP26. 'Lys-6' and 'Lys-27'-linked polyubiquitination by RNF6 modulates AR transcriptional activity and specificity. In terms of processing, palmitoylated by ZDHHC7 and ZDHHC21. Palmitoylation is required for plasma membrane targeting and for rapid intracellular signaling via ERK and AKT kinases and cAMP generation.

It localises to the nucleus. The protein resides in the cytoplasm. Steroid hormone receptors are ligand-activated transcription factors that regulate eukaryotic gene expression and affect cellular proliferation and differentiation in target tissues. Transcription factor activity is modulated by bound coactivator and corepressor proteins like ZBTB7A that recruits NCOR1 and NCOR2 to the androgen response elements/ARE on target genes, negatively regulating androgen receptor signaling and androgen-induced cell proliferation. Transcription activation is also down-regulated by NR0B2. Activated, but not phosphorylated, by HIPK3 and ZIPK/DAPK3. This is Androgen receptor (AR) from Macaca fascicularis (Crab-eating macaque).